Consider the following 987-residue polypeptide: AP3-complex subunit beta-A (987 aa).

Residues 586–662 (QDQLSDLDKQ…ISETSVSADQ (77 aa)) form a disordered region. Over residues 603-613 (DGSEESSETGD) the composition is skewed to acidic residues. Positions 614–631 (ENGSSDYDSESSNGSDFS) are enriched in low complexity.

Belongs to the adaptor complexes large subunit family. In terms of assembly, adaptor protein complex 3 (AP-3) is a heterotetramer composed of two large adaptins (delta-type subunit and beta-type subunit), a medium adaptin (mu-type subunit) and a small adaptin (sigma-type subunit).

It is found in the cytoplasm. The protein localises to the golgi apparatus. It localises to the cytoplasmic vesicle membrane. Functionally, part of the AP-3 complex, an adaptor-related complex which seems to be clathrin-associated. The complex is associated with the Golgi region as well as more peripheral structures. It facilitates the budding of vesicles from the Golgi membrane and may be directly involved in trafficking to the vacuole. It also function in maintaining the identity of lytic vacuoles and in regulating the transition between storage and lytic vacuoles. This is AP3-complex subunit beta-A (AP3BA) from Arabidopsis thaliana (Mouse-ear cress).